Reading from the N-terminus, the 372-residue chain is Hydrogenase-1 small chain (372 aa).

Residues 1–45 (MNNEETFYQAMRRQGVTRRSFLKYCSLAATSLGLGAGMAPKIAWA) constitute a signal peptide (tat-type signal). Over 46–326 (LENKPRIPVV…QMGTHSTADT (281 aa)) the chain is Periplasmic. [4Fe-4S] cluster is bound by residues cysteine 62, cysteine 65, cysteine 160, cysteine 194, histidine 232, cysteine 235, cysteine 260, and cysteine 266. 3 residues coordinate [3Fe-4S] cluster: cysteine 275, cysteine 294, and cysteine 297. Residues 327–347 (VGLTALGVVAAAVGVHAVASA) traverse the membrane as a helical segment. Residues 347–372 (AVDQRRRHNQQPTETEHQPGNEDKQA) form a disordered region. Residues 348–372 (VDQRRRHNQQPTETEHQPGNEDKQA) lie on the Cytoplasmic side of the membrane. Positions 360 to 372 (ETEHQPGNEDKQA) are enriched in basic and acidic residues.

It belongs to the [NiFe]/[NiFeSe] hydrogenase small subunit family. Heterodimer of a large and a small subunit. The cofactor is [4Fe-4S] cluster. Requires [3Fe-4S] cluster as cofactor. In terms of processing, predicted to be exported by the Tat system. The position of the signal peptide cleavage has not been experimentally proven.

The protein localises to the cell inner membrane. The catalysed reaction is H2 + A = AH2. In terms of biological role, this is one of three E.coli hydrogenases synthesized in response to different physiological conditions. HYD1 is believed to have a role in hydrogen cycling during fermentative growth. In Escherichia coli O6:H1 (strain CFT073 / ATCC 700928 / UPEC), this protein is Hydrogenase-1 small chain (hyaA).